The chain runs to 666 residues: 1-deoxy-D-xylulose-5-phosphate synthase (666 aa).

Thiamine diphosphate-binding positions include His103 and 144 to 146 (AHS). Asp175 is a Mg(2+) binding site. Thiamine diphosphate contacts are provided by residues 176-177 (GA), Asn204, Tyr314, and Glu396. Asn204 is a binding site for Mg(2+).

The protein belongs to the transketolase family. DXPS subfamily. Homodimer. The cofactor is Mg(2+). It depends on thiamine diphosphate as a cofactor.

The enzyme catalyses D-glyceraldehyde 3-phosphate + pyruvate + H(+) = 1-deoxy-D-xylulose 5-phosphate + CO2. The protein operates within metabolic intermediate biosynthesis; 1-deoxy-D-xylulose 5-phosphate biosynthesis; 1-deoxy-D-xylulose 5-phosphate from D-glyceraldehyde 3-phosphate and pyruvate: step 1/1. In terms of biological role, catalyzes the acyloin condensation reaction between C atoms 2 and 3 of pyruvate and glyceraldehyde 3-phosphate to yield 1-deoxy-D-xylulose-5-phosphate (DXP). The chain is 1-deoxy-D-xylulose-5-phosphate synthase from Nitrobacter winogradskyi (strain ATCC 25391 / DSM 10237 / CIP 104748 / NCIMB 11846 / Nb-255).